The primary structure comprises 250 residues: tRNA (guanine-N(1)-)-methyltransferase (250 aa).

S-adenosyl-L-methionine-binding positions include G114 and 134–139; that span reads IGDYVL.

Belongs to the RNA methyltransferase TrmD family. As to quaternary structure, homodimer.

Its subcellular location is the cytoplasm. It catalyses the reaction guanosine(37) in tRNA + S-adenosyl-L-methionine = N(1)-methylguanosine(37) in tRNA + S-adenosyl-L-homocysteine + H(+). Its function is as follows. Specifically methylates guanosine-37 in various tRNAs. This chain is tRNA (guanine-N(1)-)-methyltransferase, found in Moorella thermoacetica (strain ATCC 39073 / JCM 9320).